Consider the following 429-residue polypeptide: Enolase (429 aa).

Gln-163 lines the (2R)-2-phosphoglycerate pocket. Residue Glu-205 is the Proton donor of the active site. Residues Asp-242, Glu-287, and Asp-314 each coordinate Mg(2+). (2R)-2-phosphoglycerate is bound by residues Lys-339, Arg-368, Ser-369, and Lys-390. Lys-339 serves as the catalytic Proton acceptor.

It belongs to the enolase family. Requires Mg(2+) as cofactor.

It is found in the cytoplasm. Its subcellular location is the secreted. It localises to the cell surface. The catalysed reaction is (2R)-2-phosphoglycerate = phosphoenolpyruvate + H2O. It participates in carbohydrate degradation; glycolysis; pyruvate from D-glyceraldehyde 3-phosphate: step 4/5. Functionally, catalyzes the reversible conversion of 2-phosphoglycerate (2-PG) into phosphoenolpyruvate (PEP). It is essential for the degradation of carbohydrates via glycolysis. The polypeptide is Enolase (Cupriavidus taiwanensis (strain DSM 17343 / BCRC 17206 / CCUG 44338 / CIP 107171 / LMG 19424 / R1) (Ralstonia taiwanensis (strain LMG 19424))).